A 465-amino-acid polypeptide reads, in one-letter code: Putative subtilisin-like proteinase 1 (465 aa).

The first 17 residues, 1-17 (MILAIISLSVVICREVS), serve as a signal peptide directing secretion. One can recognise an Inhibitor I9 domain in the interval 19 to 90 (YIVMFDQDPS…VKMVVKDSPV (72 aa)). In terms of domain architecture, Peptidase S8 spans 115 to 447 (PWGLARVGGS…PSLFNANKKK (333 aa)). Active-site charge relay system residues include Asp148 and His180. A disulfide bridge links Cys329 with Cys360. Ser386 serves as the catalytic Charge relay system.

This sequence belongs to the peptidase S8 family.

Its subcellular location is the secreted. It localises to the extracellular space. Functionally, may be involved in the degradation of proteins for nutrient acquisition or possess a regulatory function by proteolytic activation of proproteins. The sequence is that of Putative subtilisin-like proteinase 1 (SPL1) from Encephalitozoon cuniculi (strain GB-M1) (Microsporidian parasite).